A 380-amino-acid polypeptide reads, in one-letter code: Capsular polysaccharide biosynthesis glycosyltransferase CapM (380 aa).

Belongs to the glycosyltransferase group 1 family. Glycosyltransferase 4 subfamily.

It functions in the pathway capsule biogenesis; capsule polysaccharide biosynthesis. Its function is as follows. Required for the biosynthesis of type 1 capsular polysaccharide. This chain is Capsular polysaccharide biosynthesis glycosyltransferase CapM (capM), found in Staphylococcus aureus.